Reading from the N-terminus, the 237-residue chain is DCN1-like protein 5 (237 aa).

S9, S41, and S48 each carry phosphoserine. A DCUN1 domain is found at F46 to K232.

In terms of assembly, part of a complex that contains DCUN1D5, CUL1 and RBX1; this interaction is bridged by CUL1. Interacts (via the DCUN1 domain) with the unneddylated cullins: interacts with CUL1, CUL2, CUL3, CUL4A, CUL4B and CUL5; these interactions promote the cullin neddylation and the identity of the cullin dictates the affinity of the interaction. Interacts (via DCUN1 domain) with UBE2M (N-terminally acetylated form) and probably with UBE2F (N-terminally acetylated form). May also interact with regulators or subunits of cullin-RING ligases such as RBX1, RNF7, ELOB and DDB1; these interactions are bridged by cullins. Interacts with CAND1; this interaction is bridged by cullins and strongly inhibits the neddylation of cullins. These CAND-cullin-DCNL complexes can only be neddylated in the presence of a substrate adapter. Phosphorylation at Ser-41 is independent of cullin's interaction. Phosphorylated in response to both TICAM1 and MYD88 dependent Toll-like receptor (TLR) pathway activation. Phosphorylated in response to IL1B stimulation. Weakly expressed in testis, skin and immune tissues (thymus, spleen and lymph nodes).

It is found in the nucleus. The protein resides in the cytoplasm. The protein localises to the cytoskeleton. It localises to the spindle. Its function is as follows. Contributes to the neddylation of all cullins by transferring NEDD8 from N-terminally acetylated NEDD8-conjugating E2s enzyme to different cullin C-terminal domain-RBX complexes which is necessary for the activation of cullin-RING E3 ubiquitin ligases (CRLs). May play a role in DNA damage response and may participate in cell proliferation and anchorage-independent cell growth. This chain is DCN1-like protein 5, found in Homo sapiens (Human).